Here is a 119-residue protein sequence, read N- to C-terminus: Nascent polypeptide-associated complex protein (119 aa).

Residues 5 to 73 (RMNSREMRRL…MREVPKEPEE (69 aa)) form the NAC-A/B domain.

The protein belongs to the NAC-alpha family. In terms of assembly, homodimer. Interacts with the ribosome. Binds ribosomal RNA.

Its function is as follows. Contacts the emerging nascent chain on the ribosome. The polypeptide is Nascent polypeptide-associated complex protein (Thermoplasma acidophilum (strain ATCC 25905 / DSM 1728 / JCM 9062 / NBRC 15155 / AMRC-C165)).